A 354-amino-acid chain; its full sequence is Uroporphyrinogen decarboxylase (354 aa).

Substrate contacts are provided by residues 27 to 31 (RQAGR), aspartate 77, tyrosine 153, threonine 208, and histidine 326.

It belongs to the uroporphyrinogen decarboxylase family. Homodimer.

Its subcellular location is the cytoplasm. It carries out the reaction uroporphyrinogen III + 4 H(+) = coproporphyrinogen III + 4 CO2. The protein operates within porphyrin-containing compound metabolism; protoporphyrin-IX biosynthesis; coproporphyrinogen-III from 5-aminolevulinate: step 4/4. Catalyzes the decarboxylation of four acetate groups of uroporphyrinogen-III to yield coproporphyrinogen-III. This Neisseria meningitidis serogroup C (strain 053442) protein is Uroporphyrinogen decarboxylase.